The sequence spans 1321 residues: MFKRGSNRATSSSQGQQPENPPSLKYQSSSSRYSFHRQYNTGFGTSPFRISPKYKPDSRTPFSFDGTGNVGPESSLNEEESNARWRPSESSFDKRRTFHGAKYSLSIGKEVSSIDKINSPESRSLIIAGKSHLGIYTFDEDSKTITNVHDFLQTAKTNTGITKNTSSTLRRTTKKISTISDVKAGFYNHKNYVAICGTSTSVAIYDINKTSAIDNPVVTSLSEHTRSINSVDFNMVQTSLLISGGQDGCIKIWDLRSPKISTTRSDVSINTGSDSIRDVKWMPSYEFSNDTNGLSNRHFKFASVHDSGLLLKFDLRQPNQAEKKINAHSGPALCLNWHPHQDYIISGGRDGKCCLWYVGDKSNQVGNISSTNLNSSNPATHNLSSSYPLGLSNTLAFPELTINTARSMNKLKFRPKYETNVFNSLIGTSSMGEDSDVSVYSLARKYIPKNVIASSAPSVGFVWWDDDTIFNIDKQNTVTGWDISHEPTVLDNLPKNTIKWRDLDGDGILFLDQKPGGYLSQEETVLTPGSGENRKMPFTHRMSSATANSFTGGNNPNITSNTSSSAASFSKNPTLGMSQLHQGNVLGERSTMSKHAQSVNSKFSPSVNSSPWTNPYSSPHHNSIVSGSESALHAVNDSFLQSPYLIGLDFPHILNTIRNTRLAEFNRKVESAALLELKSSPTEVFKFLARELKFSYKYNSIETKDNGRELDSSSTHGSVDSKTNLMEKLGLSENNTWTHLIKYTKSHDSDEVISKGTELKTPVSDKSANIEKSATNHKAETNQDENSSCINSSNQVKTKNLIELITLCDKNAEIYIMLEDFSNYKIWLLMRDSLLWDLKVLTESMAVDVTADQEVNDQSSIDQPWKKNDSFTSLKEARQASVASGYSSYSATDLSSSVNTNNRHSFNEPTHLTQTPPVSHLKAQLQGSKETTTISRADSIQNSLQNDIIEIRKLRQSHGDRAELAIDEEEEGEEREELTKRAFEEDENNKQFINIPRRESGPSALMPSPSHVSSQSEIPSNPENHHQPRRPRTSFIDSFMSQLRSPGSSNVDADRESTGSKKSSMPSFSSSAATFLNSKKSQNANHNKLKSATEVSDILESEFATQKSWNGSVAKTTTQMSGITALMNETKKLENTITPPWSSRRLIHQLYEQSVASGNILLTMAILLLFQDMFQLVDTETVKNSIAEFTELLHRYELFEIAAELMKNCPYEDISSSSAGFSSIQLFCDKCNKPLVNESSKEKIIKERLEGNSSAMSRFGYWYCDSCSKRNTLCCFCNKPMKSLAISMLNCGHEGHFECLKKWFFDENMDVCPLGCPAILF.

The tract at residues 1–91 (MFKRGSNRAT…NARWRPSESS (91 aa)) is disordered. The span at 7-18 (NRATSSSQGQQP) shows a compositional bias: polar residues. Positions 23–33 (SLKYQSSSSRY) are enriched in low complexity. The span at 81–91 (SNARWRPSESS) shows a compositional bias: basic and acidic residues. 7 WD repeats span residues 109 to 148 (KEVSSIDKINSPESRSLIIAGKSHLGIYTFDEDSKTITNV), 174 to 215 (KKIS…AIDN), 223 to 263 (EHTR…ISTT), 271 to 323 (TGSD…QAEK), 327 to 366 (AHSGPALCLNWHPHQDYIISGGRDGKCCLWYVGDKSNQVG), 403 to 450 (NTAR…IPKN), and 453 to 491 (ASSAPSVGFVWWDDDTIFNIDKQNTVTGWDISHEPTVLD). 2 disordered regions span residues 546–574 (TANSFTGGNNPNITSNTSSSAASFSKNPT) and 589–611 (RSTMSKHAQSVNSKFSPSVNSSP). A compositionally biased stretch (low complexity) spans 551–574 (TGGNNPNITSNTSSSAASFSKNPT). Residues 593-611 (SKHAQSVNSKFSPSVNSSP) are compositionally biased toward polar residues. One copy of the WD 8 repeat lies at 797–837 (KTKNLIELITLCDKNAEIYIMLEDFSNYKIWLLMRDSLLWD). Disordered stretches follow at residues 893–917 (DLSSSVNTNNRHSFNEPTHLTQTPP) and 957–1069 (SHGD…PSFS). Residues 898 to 917 (VNTNNRHSFNEPTHLTQTPP) show a composition bias toward polar residues. The span at 965 to 976 (AIDEEEEGEERE) shows a compositional bias: acidic residues. Composition is skewed to polar residues over residues 1010 to 1022 (SHVSSQSEIPSNP) and 1035 to 1051 (FIDSFMSQLRSPGSSNV). The segment covering 1060–1069 (SKKSSMPSFS) has biased composition (low complexity). One copy of the WD 9 repeat lies at 1108 to 1151 (SWNGSVAKTTTQMSGITALMNETKKLENTITPPWSSRRLIHQLY). Residues 1274–1316 (CCFCNKPMKSLAISMLNCGHEGHFECLKKWFFDENMDVCPLGC) form an RING-type; degenerate zinc finger.

The protein belongs to the WD repeat RTC1 family.

It is found in the vacuole. Its function is as follows. May be involved in a process influencing telomere capping. The chain is Restriction of telomere capping protein 1 (RTC1) from Kluyveromyces lactis (strain ATCC 8585 / CBS 2359 / DSM 70799 / NBRC 1267 / NRRL Y-1140 / WM37) (Yeast).